A 445-amino-acid polypeptide reads, in one-letter code: GTPase Der (445 aa).

EngA-type G domains lie at 3–167 and 180–353; these read PVIA…YAGQ and IKIA…AAAM. Residues 9 to 16, 56 to 60, 119 to 122, 186 to 193, 233 to 237, and 298 to 301 each bind GTP; these read GRPNVGKS, DTGGF, NKAE, DTAGL, and NKWD. The KH-like domain maps to 354 to 438; it reads AKLPTPKLTR…PLRIEFRSSN (85 aa).

This sequence belongs to the TRAFAC class TrmE-Era-EngA-EngB-Septin-like GTPase superfamily. EngA (Der) GTPase family. Associates with the 50S ribosomal subunit.

Its function is as follows. GTPase that plays an essential role in the late steps of ribosome biogenesis. The protein is GTPase Der of Burkholderia ambifaria (strain MC40-6).